A 58-amino-acid polypeptide reads, in one-letter code: Small ribosomal subunit protein bS21 (58 aa).

Belongs to the bacterial ribosomal protein bS21 family.

In Prochlorococcus marinus (strain MIT 9301), this protein is Small ribosomal subunit protein bS21.